The primary structure comprises 564 residues: Acetylcholine receptor subunit alpha-type deg-3 (564 aa).

The signal sequence occupies residues 1 to 20; sequence MTLKIRTIIILFCVISVTTT. Residues 21 to 268 lie on the Extracellular side of the membrane; sequence SQSLNATLKT…SLVIQRKPLY (248 aa). Asn25, Asn37, Asn125, and Asn198 each carry an N-linked (GlcNAc...) asparagine glycan. Intrachain disulfides connect Cys185–Cys199 and Cys248–Cys249. The next 3 helical transmembrane spans lie at 269–289, 302–319, and 329–353; these read YLVNLIIPTSIITLVAITGFF, INLGITTLLAMSILMLMV, and FVPLIAWFYLSIIIIISIGTFLTSV. At 354–526 the chain is on the cytoplasmic side; it reads VLSVQGRRQY…WEFLATVLDR (173 aa). The helical transmembrane segment at 527–547 threads the bilayer; it reads FLLIVFVGAVVIVTAGLILVG.

It belongs to the ligand-gated ion channel (TC 1.A.9) family. Acetylcholine receptor (TC 1.A.9.1) subfamily. The functional receptor is a heteromer of deg-3 and des-2. Interacts with ric-3; which is required for proper receptor folding.

The protein resides in the postsynaptic cell membrane. The protein localises to the cell membrane. Subunit of the non-synaptic neuronal acetylcholine receptor, which may play a role in chemotaxis towards choline. After binding choline or acetylcholine, the AChR responds by an extensive change in conformation that affects all subunits and leads to opening of an ion-conducting channel across the plasma membrane. The polypeptide is Acetylcholine receptor subunit alpha-type deg-3 (deg-3) (Caenorhabditis elegans).